Consider the following 192-residue polypeptide: Fe/S biogenesis protein NfuA (192 aa).

[4Fe-4S] cluster contacts are provided by cysteine 149 and cysteine 152.

It belongs to the NfuA family. In terms of assembly, homodimer. [4Fe-4S] cluster is required as a cofactor.

Involved in iron-sulfur cluster biogenesis. Binds a 4Fe-4S cluster, can transfer this cluster to apoproteins, and thereby intervenes in the maturation of Fe/S proteins. Could also act as a scaffold/chaperone for damaged Fe/S proteins. The protein is Fe/S biogenesis protein NfuA of Shewanella sp. (strain ANA-3).